The sequence spans 602 residues: Probable translation initiation factor IF-2 (602 aa).

Residues 18 to 233 enclose the tr-type G domain; that stretch reads LRTPIVCVMG…LVGLAQRFLK (216 aa). The segment at 27 to 34 is G1; that stretch reads GHVDHGKT. 27–34 contributes to the GTP binding site; sequence GHVDHGKT. The interval 52–56 is G2; that stretch reads AITQH. Residues 88 to 91 are G3; the sequence is DTPG. Residues 88–92 and 142–145 each bind GTP; these read DTPGH and NKID. The G4 stretch occupies residues 142-145; it reads NKID. The interval 210 to 212 is G5; it reads SAI.

The protein belongs to the TRAFAC class translation factor GTPase superfamily. Classic translation factor GTPase family. IF-2 subfamily.

Its function is as follows. Function in general translation initiation by promoting the binding of the formylmethionine-tRNA to ribosomes. Seems to function along with eIF-2. The polypeptide is Probable translation initiation factor IF-2 (Methanothrix thermoacetophila (strain DSM 6194 / JCM 14653 / NBRC 101360 / PT) (Methanosaeta thermophila)).